Reading from the N-terminus, the 505-residue chain is Protein dml1 (505 aa).

Residues 330–358 are disordered; the sequence is LPEDMSNHTQPVQNPEDRRTQASKGGSSK.

It belongs to the misato family.

The protein localises to the mitochondrion. Functionally, involved in the partitioning of the mitochondrial organelle and mitochondrial DNA (mtDNA) inheritance. In Aspergillus fumigatus (strain ATCC MYA-4609 / CBS 101355 / FGSC A1100 / Af293) (Neosartorya fumigata), this protein is Protein dml1 (dml1).